Here is a 138-residue protein sequence, read N- to C-terminus: Transcription antitermination protein NusB (138 aa).

It belongs to the NusB family.

In terms of biological role, involved in transcription antitermination. Required for transcription of ribosomal RNA (rRNA) genes. Binds specifically to the boxA antiterminator sequence of the ribosomal RNA (rrn) operons. This Leptospira borgpetersenii serovar Hardjo-bovis (strain JB197) protein is Transcription antitermination protein NusB.